A 235-amino-acid chain; its full sequence is tRNA1(Val) (adenine(37)-N6)-methyltransferase (235 aa).

This sequence belongs to the methyltransferase superfamily. tRNA (adenine-N(6)-)-methyltransferase family.

The protein localises to the cytoplasm. It carries out the reaction adenosine(37) in tRNA1(Val) + S-adenosyl-L-methionine = N(6)-methyladenosine(37) in tRNA1(Val) + S-adenosyl-L-homocysteine + H(+). Functionally, specifically methylates the adenine in position 37 of tRNA(1)(Val) (anticodon cmo5UAC). The protein is tRNA1(Val) (adenine(37)-N6)-methyltransferase of Glaesserella parasuis serovar 5 (strain SH0165) (Haemophilus parasuis).